The primary structure comprises 333 residues: FAD-dependent monooxygenase pytG (333 aa).

The chain crosses the membrane as a helical span at residues 6 to 26; sequence LPNVSVAIIGAGIGGLTLGAF. FAD-binding residues include Glu38 and Arg109. N-linked (GlcNAc...) asparagine glycosylation is present at Asn303.

This sequence belongs to the paxM FAD-dependent monooxygenase family. The cofactor is FAD.

It localises to the membrane. Its pathway is secondary metabolite biosynthesis. FAD-dependent monooxygenase; part of the gene cluster that mediates the biosynthesis of pyranterreones, a family of antioxidative compounds. The first step of pyranonigrins biosynthesis is performed by the hybrid PKS-NRPS synthetase pytA that condenses 4 malonyl-CoA units ato the acetyl starter unit by the modular PKS of pytA. The acyl chain is then connected to an L-serine through the amide bond by the modular NRPS of pytA. A tetramic acid is formed and released from the PKS-NRPS pytA to give pyranterreone 5 with the help of the thioesterase pytI. Pyranterreone 5 could be methylated by pytC to afford pyranterreone 6. Both pyranterreones 5 and 6 are subsequently oxidized by the FAD-linked oxidoreductase pytB and the cytochrome P450 monooxygenase pytD to form the fused gamma-pyrone core, resulting in pyranterreones 7 and 11, respectively. The hydroxy group at C-8 of pyranterreones 7 and 11 are dehydrated by the aspartyl protease pytH to form a delta-7 double bond to give pyranterreones 3 and 1, 2 accordingly. The exo-methylene of pyranterreone 3 could be reduced into a pendant methyl by reductase pytE to provide pyranterreone 4, also known as cordylactam. Pyranterreone 4 can be reconverted to pyranterreone 3 through pytB-catalyzed dehydrogenation or further oxidized to pyranterreones 9 and 10. The protein is FAD-dependent monooxygenase pytG of Aspergillus terreus (strain NIH 2624 / FGSC A1156).